We begin with the raw amino-acid sequence, 258 residues long: Thiazole synthase (258 aa).

Catalysis depends on Lys100, which acts as the Schiff-base intermediate with DXP. 1-deoxy-D-xylulose 5-phosphate is bound by residues Gly161, 187-188 (AG), and 209-210 (NT).

The protein belongs to the ThiG family. Homotetramer. Forms heterodimers with either ThiH or ThiS.

It localises to the cytoplasm. The enzyme catalyses [ThiS sulfur-carrier protein]-C-terminal-Gly-aminoethanethioate + 2-iminoacetate + 1-deoxy-D-xylulose 5-phosphate = [ThiS sulfur-carrier protein]-C-terminal Gly-Gly + 2-[(2R,5Z)-2-carboxy-4-methylthiazol-5(2H)-ylidene]ethyl phosphate + 2 H2O + H(+). Its pathway is cofactor biosynthesis; thiamine diphosphate biosynthesis. Its function is as follows. Catalyzes the rearrangement of 1-deoxy-D-xylulose 5-phosphate (DXP) to produce the thiazole phosphate moiety of thiamine. Sulfur is provided by the thiocarboxylate moiety of the carrier protein ThiS. In vitro, sulfur can be provided by H(2)S. This chain is Thiazole synthase, found in Campylobacter jejuni subsp. jejuni serotype O:23/36 (strain 81-176).